The sequence spans 373 residues: Septin homolog spn3 (373 aa).

One can recognise a Septin-type G domain in the interval 10-286 (KGIPLNLMVV…ETYRTEKLST (277 aa)). The interval 20 to 27 (GDVGLGRT) is G1 motif. 20–27 (GDVGLGRT) contacts GTP. Positions 79 to 82 (DTPH) are G3 motif. The segment at 161-164 (AKAD) is G4 motif. GTP is bound by residues 162-170 (KADSLTAQE) and Arg-235. Ser-303 carries the phosphoserine modification. Residues 311–357 (EDRLRAIELSVQKEIEEKRRQLLAREEALRALEEKLAASTAAMANAS) adopt a coiled-coil conformation.

The protein belongs to the TRAFAC class TrmE-Era-EngA-EngB-Septin-like GTPase superfamily. Septin GTPase family. As to quaternary structure, component of the septin complex composed of two copies of each spn1, spn2, spn3 and spn4.

The protein resides in the cytoplasm. The protein localises to the cell cortex. Functionally, plays a role in the cell cycle. Involved in a late stage of septum formation leading to the separation of the daughter cells. The polypeptide is Septin homolog spn3 (spn3) (Schizosaccharomyces pombe (strain 972 / ATCC 24843) (Fission yeast)).